Reading from the N-terminus, the 72-residue chain is MAKDDVIEVDGKVVDTMPNAMFTVELENGHQVLATISGKIRKNYIRILPGDKVQVELSPYDLTRGRITYRFK.

In terms of domain architecture, S1-like spans A2–K72.

It belongs to the IF-1 family. In terms of assembly, component of the 30S ribosomal translation pre-initiation complex which assembles on the 30S ribosome in the order IF-2 and IF-3, IF-1 and N-formylmethionyl-tRNA(fMet); mRNA recruitment can occur at any time during PIC assembly.

The protein localises to the cytoplasm. One of the essential components for the initiation of protein synthesis. Stabilizes the binding of IF-2 and IF-3 on the 30S subunit to which N-formylmethionyl-tRNA(fMet) subsequently binds. Helps modulate mRNA selection, yielding the 30S pre-initiation complex (PIC). Upon addition of the 50S ribosomal subunit IF-1, IF-2 and IF-3 are released leaving the mature 70S translation initiation complex. The sequence is that of Translation initiation factor IF-1 from Lactococcus lactis subsp. lactis (strain IL1403) (Streptococcus lactis).